A 71-amino-acid chain; its full sequence is Phosphatidylinositol N-acetylglucosaminyltransferase ERI1 subunit (71 aa).

The next 2 helical transmembrane spans lie at 5–25 and 35–55; these read VAATLVLVVTYSIVGASLWCL and LYYWCIVQLLPVMLWVWCVIS.

As to quaternary structure, interacts with GPI2, suggesting that it is a component of the GPI-GnT complex, probably composed of GPI1, GPI2, GPI3, GPI15, and ERI1.

The protein localises to the endoplasmic reticulum membrane. It participates in glycolipid biosynthesis; glycosylphosphatidylinositol-anchor biosynthesis. Probable component of the GPI-GlcNAc transferase (GPI-GnT) complex in the endoplasmic reticulum, a complex that catalyzes transfer of GlcNAc from UDP-GlcNAc to an acceptor phosphatidylinositol, the first step in the production of GPI-anchors for cell surface proteins. In Eremothecium gossypii (strain ATCC 10895 / CBS 109.51 / FGSC 9923 / NRRL Y-1056) (Yeast), this protein is Phosphatidylinositol N-acetylglucosaminyltransferase ERI1 subunit (ERI1).